The sequence spans 280 residues: Fructose-1,6-bisphosphatase class 1 (280 aa).

Residues E64, D83, L85, and D86 each coordinate Mg(2+). Residues 86-89, Y189, and K220 contribute to the substrate site; that span reads DGSS. A Mg(2+)-binding site is contributed by E226.

Belongs to the FBPase class 1 family. As to quaternary structure, homotetramer. Mg(2+) serves as cofactor.

It localises to the cytoplasm. It carries out the reaction beta-D-fructose 1,6-bisphosphate + H2O = beta-D-fructose 6-phosphate + phosphate. It functions in the pathway carbohydrate biosynthesis; gluconeogenesis. This Campylobacter jejuni subsp. jejuni serotype O:6 (strain 81116 / NCTC 11828) protein is Fructose-1,6-bisphosphatase class 1.